We begin with the raw amino-acid sequence, 301 residues long: Probable alpha-L-glutamate ligase (301 aa).

In terms of domain architecture, ATP-grasp spans 104–287 (LQLMSRKGLG…VASMIIKHIE (184 aa)). ATP-binding positions include Lys141, 178–179 (EY), Asp187, and 211–213 (RSN). Mg(2+) contacts are provided by Asp248, Glu260, and Asn262. Mn(2+) is bound by residues Asp248, Glu260, and Asn262.

This sequence belongs to the RimK family. Mg(2+) is required as a cofactor. The cofactor is Mn(2+).

This chain is Probable alpha-L-glutamate ligase, found in Marinomonas sp. (strain MWYL1).